The sequence spans 132 residues: Sodium/calcium exchanger regulatory protein 1 (132 aa).

Positions 126 and 128 each coordinate (9Z)-hexadecenoate.

This sequence belongs to the calycin superfamily. Fatty-acid binding protein (FABP) family. Interacts with Na(+)/Ca(2+) exchanger NCXSQ1; ReP1-NCXSQ phosphorylation does not affect the interaction. In terms of processing, phosphorylated. Phosphorylation may result in the release of the bound fatty acid. As to expression, expressed in the optic nerve (at protein level).

The protein localises to the cytoplasm. It is found in the membrane. Functionally, binds and may transport fatty acids such as palmitoleate. Also binds poly-phosphoinositides including phosphatidylinositol 4-phosphate (PtdIns(4)P), phosphatidylinositol 4,5-bisphosphate (PtdIns(4,5)P2) and phosphatidylinositol 3,4,5-trisphosphate (PtdIns(3,4,5)P3), and phosphatidic acid. When phosphorylated, stimulates the activity of optic nerve Na(+)/Ca(2+) exchanger. The protein is Sodium/calcium exchanger regulatory protein 1 of Doryteuthis pealeii (Longfin inshore squid).